A 148-amino-acid polypeptide reads, in one-letter code: Arginine repressor (148 aa).

This sequence belongs to the ArgR family.

The protein resides in the cytoplasm. Its pathway is amino-acid biosynthesis; L-arginine biosynthesis [regulation]. Regulates arginine biosynthesis genes. The chain is Arginine repressor from Chlorobium luteolum (strain DSM 273 / BCRC 81028 / 2530) (Pelodictyon luteolum).